The chain runs to 337 residues: Tetraacyldisaccharide 4'-kinase (337 aa).

An ATP-binding site is contributed by 56-63; sequence VAGGAGKT.

The protein belongs to the LpxK family.

The enzyme catalyses a lipid A disaccharide + ATP = a lipid IVA + ADP + H(+). Its pathway is glycolipid biosynthesis; lipid IV(A) biosynthesis; lipid IV(A) from (3R)-3-hydroxytetradecanoyl-[acyl-carrier-protein] and UDP-N-acetyl-alpha-D-glucosamine: step 6/6. Functionally, transfers the gamma-phosphate of ATP to the 4'-position of a tetraacyldisaccharide 1-phosphate intermediate (termed DS-1-P) to form tetraacyldisaccharide 1,4'-bis-phosphate (lipid IVA). The polypeptide is Tetraacyldisaccharide 4'-kinase (Rhodospirillum centenum (strain ATCC 51521 / SW)).